Here is a 270-residue protein sequence, read N- to C-terminus: MKRIALGVQYDGSVFCGWQSQPHGNTVQDELERALREFAQTPVQTIVAGRTDTGVHGLGQVVHFDTELDRADVSWVRGTNSFLPKTISVQWAKPMPDEFHARFSAFERTYYYVLYVHPVRSPMLAARAGWVHAALDVDAMQAAAAHLIGEHDFSAFRSSQCQSKTPVKHLYQIDVRQQGDFIHFRFRANAFLHHMVRNLMGCLVYIGRGRRPVEWMAEVLASRDREFAAPTFMPDGLYLAQVGYPEQFAVPAPQTGSVPWSTVWTEQAQT.

The Nucleophile role is filled by aspartate 52. Tyrosine 110 lines the substrate pocket.

This sequence belongs to the tRNA pseudouridine synthase TruA family. Homodimer.

It carries out the reaction uridine(38/39/40) in tRNA = pseudouridine(38/39/40) in tRNA. Its function is as follows. Formation of pseudouridine at positions 38, 39 and 40 in the anticodon stem and loop of transfer RNAs. This is tRNA pseudouridine synthase A from Paraburkholderia xenovorans (strain LB400).